The primary structure comprises 429 residues: Glycine betaine monooxygenase oxygenase subunit (429 aa).

The 108-residue stretch at 56-163 (WLIAGMTCEI…VKTAGGYIFI (108 aa)) folds into the Rieske domain. Residues Cys98, His100, Cys118, and His121 each contribute to the [2Fe-2S] cluster site. Residues His217 and His222 each contribute to the Fe cation site.

This sequence belongs to the bacterial ring-hydroxylating dioxygenase alpha subunit family. In terms of assembly, the system is composed of an oxygenase subunit (GbcA) and a reductase subunit (GbcB). The cofactor is [2Fe-2S] cluster. It depends on Fe cation as a cofactor.

The catalysed reaction is glycine betaine + NADH + O2 + H(+) = N,N-dimethylglycine + formaldehyde + NAD(+) + H2O. In terms of biological role, involved in degradation of glycine betaine. Part of a Rieske-type oxygenase system that catalyzes the conversion of glycine betaine (GB) to dimethylglycine (DMG). This subunit is the terminal oxygenase component of the system. This chain is Glycine betaine monooxygenase oxygenase subunit, found in Pseudomonas aeruginosa (strain UCBPP-PA14).